The following is a 273-amino-acid chain: Bis(5'-nucleosyl)-tetraphosphatase, symmetrical (273 aa).

It belongs to the Ap4A hydrolase family.

It catalyses the reaction P(1),P(4)-bis(5'-adenosyl) tetraphosphate + H2O = 2 ADP + 2 H(+). In terms of biological role, hydrolyzes diadenosine 5',5'''-P1,P4-tetraphosphate to yield ADP. The protein is Bis(5'-nucleosyl)-tetraphosphatase, symmetrical of Aliivibrio salmonicida (strain LFI1238) (Vibrio salmonicida (strain LFI1238)).